Consider the following 915-residue polypeptide: MLPLGSEPALNELLLRKEEEWRALQAHRTQLQEAALQDTRSQLEEAQGKLRCLQEDFVYNLQVLEERDLELERYDAAFAQAREWEEARRAEVSELKIEAAKLRQALAREARKVEELQQQQQLAFQEHRLELERVHSDKNGEIDHHREQYENLKWTLERKLEELDGELALQRQELLLEFESKMRKREHEFRLQADNMSNTALSRELKVKLLHKELEALKEAGAKAAESLQRAEATNAELERKLQSRAGELQDLEAMSRARVKDLEDKLHSVQLTRKKEEETFKRKHEELDRLAREKDAVLVAVKGAHVEQLQELQTRVLELQAHCETLEAQLRRAEWRQADTAKEKDAAIDQLREDASTVKSAWDAQIAQLSKEMVSRDLQIQTLQEEEVKLKAQVARSQQDIERYKQQLSLAVERERSLERDQVQLGLDWQRRCDDIERDQIQKSEALIQGLSMAKSQVAAKLQETEQALQEQEVVLKAVTLERDQAVQALRMHGLPRPGAQMLLRQHEEEISKDFPSSEIQRLREQNTSLRNAIAQMRKEMEALSHQIPPPIQTAAESTDANQPDPEAGGDAATPDYVLALEAEIRTLKHKFKTLEKHLEDVLDPLKMSSPHAESQPSVRTSTETTGGSAQAGQAGGSVQAGQAGGSVQAGPVSSGLALRKLGDRVQLLNLLVTRLRQKVLREPLEPAALQRELPREVDQVHLEVLELRKQVAELGKHLRIAQHGGAEPSGRKQPPASDAVALGREDAKSAEDEAPSRHLGKHQPRSAQVGSRLDALQGPKTQHSIHTVTCKSPRQKEDRSPKPPQAPQHPEEHGRQSHSSSSFASGTLQDMWRLLDLGSSPSGVTSQGDSTPELPAPPAADRRPVKMQAGIATPGMKTAAQAKAKTTGASRSHPAKAKGCQRPPKIRNYNIMD.

Residues Met1–Gln502 form a centrosomal targeting domain region. Coiled-coil stretches lie at residues Val92 to Glu173, Leu214 to Asp422, Lys456 to Glu483, and Ile521 to Gln548. Disordered regions lie at residues Thr555–Ala574, Pro606–Pro653, and Gln724–Asp915. Residues Pro606–Asp915 are microtubule binding domain. The span at His613–Thr627 shows a compositional bias: polar residues. Low complexity predominate over residues Gly628–Gly652. The segment covering Gly745–Ser758 has biased composition (basic and acidic residues). Composition is skewed to polar residues over residues Pro781–Ser794, Ser819–Leu830, and Ser841–Ser852. Residues Lys879–Ala891 show a composition bias toward low complexity.

Interacts with CEP63; the interaction is required for their location to proximal end of centrioles. Interacts with microtubules.

It localises to the cytoplasm. It is found in the cytoskeleton. Its subcellular location is the microtubule organizing center. The protein localises to the centrosome. The protein resides in the centriolar satellite. It localises to the centriole. It is found in the spindle. Pleiotropic regulator of centriole duplication, mitosis, and ciliogenesis. Critical interface between centrosome and microtubule-mediated cellular processes. Centriole duplication protein required for recruitment of CEP63, CEP152, and PLK4 to the centrosome. Independent of its centrosomal targeting, localizes to and interacts with microtubules and regulates microtubule nucleation, stability, and mitotic progression. The polypeptide is Coiled-coil domain-containing protein 57 (Homo sapiens (Human)).